Here is a 189-residue protein sequence, read N- to C-terminus: uncharacterized protein (189 aa).

The signal sequence occupies residues 1–23 (MIKTTPHKIVILMGILLSPSVFA). The segment at 104–125 (SSPKLIIPQSGDSSSTTSNIGM) is disordered. Over residues 113-123 (SGDSSSTTSNI) the composition is skewed to polar residues.

Belongs to the fimbrial protein family.

It is found in the fimbrium. In terms of biological role, part of the yadCKLM-htrE-yadVN fimbrial operon. Could contribute to adhesion to various surfaces in specific environmental niches. This is an uncharacterized protein from Escherichia coli (strain K12).